The following is a 176-amino-acid chain: Ribosome maturation factor RimM (176 aa).

Positions 100–172 (PDTYYDHQLV…IVEIDPPHGL (73 aa)) constitute a PRC barrel domain.

The protein belongs to the RimM family. As to quaternary structure, binds ribosomal protein uS19.

The protein localises to the cytoplasm. Its function is as follows. An accessory protein needed during the final step in the assembly of 30S ribosomal subunit, possibly for assembly of the head region. Essential for efficient processing of 16S rRNA. May be needed both before and after RbfA during the maturation of 16S rRNA. It has affinity for free ribosomal 30S subunits but not for 70S ribosomes. The sequence is that of Ribosome maturation factor RimM from Mycobacterium bovis (strain ATCC BAA-935 / AF2122/97).